Reading from the N-terminus, the 264-residue chain is Thymidylate synthase (264 aa).

Arg-21 is a binding site for dUMP. His-51 is a (6R)-5,10-methylene-5,6,7,8-tetrahydrofolate binding site. 126 to 127 contacts dUMP; sequence RR. Residue Cys-146 is the Nucleophile of the active site. Residues 166-169, Asn-177, and 207-209 each bind dUMP; these read RSAD and HLY. Asp-169 is a (6R)-5,10-methylene-5,6,7,8-tetrahydrofolate binding site. (6R)-5,10-methylene-5,6,7,8-tetrahydrofolate is bound at residue Ala-263.

This sequence belongs to the thymidylate synthase family. Bacterial-type ThyA subfamily. In terms of assembly, homodimer.

Its subcellular location is the cytoplasm. It carries out the reaction dUMP + (6R)-5,10-methylene-5,6,7,8-tetrahydrofolate = 7,8-dihydrofolate + dTMP. Its pathway is pyrimidine metabolism; dTTP biosynthesis. In terms of biological role, catalyzes the reductive methylation of 2'-deoxyuridine-5'-monophosphate (dUMP) to 2'-deoxythymidine-5'-monophosphate (dTMP) while utilizing 5,10-methylenetetrahydrofolate (mTHF) as the methyl donor and reductant in the reaction, yielding dihydrofolate (DHF) as a by-product. This enzymatic reaction provides an intracellular de novo source of dTMP, an essential precursor for DNA biosynthesis. The sequence is that of Thymidylate synthase from Legionella pneumophila (strain Lens).